Here is a 304-residue protein sequence, read N- to C-terminus: Cytochrome c biogenesis protein CcsA (304 aa).

The next 8 helical transmembrane spans lie at 8 to 28 (LVTS…PIAF), 37 to 57 (PGVV…QLVL), 63 to 83 (GHFP…ACTL), 96 to 116 (IVAA…SFAL), 141 to 161 (VIMV…AVLV), 212 to 232 (TITV…VWAN), 246 to 263 (TWAL…HTRL), and 275 to 295 (VAVV…LLGI).

This sequence belongs to the CcmF/CycK/Ccl1/NrfE/CcsA family. In terms of assembly, may interact with ccs1.

Its subcellular location is the cellular thylakoid membrane. In terms of biological role, required during biogenesis of c-type cytochromes (cytochrome c6 and cytochrome f) at the step of heme attachment. The polypeptide is Cytochrome c biogenesis protein CcsA (Synechococcus sp. (strain CC9902)).